Reading from the N-terminus, the 245-residue chain is Probable phosphatase CKO_02035 (245 aa).

9 residues coordinate Zn(2+): histidine 7, histidine 9, histidine 15, histidine 40, glutamate 73, histidine 101, histidine 131, aspartate 192, and histidine 194.

It belongs to the PHP family. As to quaternary structure, homotrimer. It depends on Zn(2+) as a cofactor.

The chain is Probable phosphatase CKO_02035 from Citrobacter koseri (strain ATCC BAA-895 / CDC 4225-83 / SGSC4696).